The sequence spans 798 residues: RNA cytosine-C(5)-methyltransferase NSUN2 (798 aa).

Residues 1-13 (MGRRNRRNRQRHQ) are compositionally biased toward basic residues. A disordered region spans residues 1-30 (MGRRNRRNRQRHQRSTEQRSPAEEEQRRKA). Over residues 14–30 (RSTEQRSPAEEEQRRKA) the composition is skewed to basic and acidic residues. Residues 186–192 (CAAPGSK), Asp-217, Asp-244, and Asp-270 each bind S-adenosyl-L-methionine. Cys-323 functions as the Nucleophile in the catalytic mechanism. Disordered regions lie at residues 476 to 499 (DEPA…SSKT) and 723 to 798 (KACD…ESVD). The span at 723-747 (KACDEEHIDEKMDIDGAKEESKELS) shows a compositional bias: basic and acidic residues. Residues 751–762 (SGDDEDPKEEDV) are compositionally biased toward acidic residues. Residues 763-772 (IDRGVLEHVA) show a composition bias toward basic and acidic residues.

It belongs to the class I-like SAM-binding methyltransferase superfamily. RsmB/NOP family. TRM4 subfamily.

The protein resides in the nucleus. It localises to the nucleolus. It is found in the cytoplasm. Its subcellular location is the mitochondrion. The protein localises to the cytoskeleton. The protein resides in the spindle. It localises to the secreted. It is found in the extracellular exosome. It carries out the reaction cytidine(48) in tRNA + S-adenosyl-L-methionine = 5-methylcytidine(48) in tRNA + S-adenosyl-L-homocysteine + H(+). The catalysed reaction is cytidine(49) in tRNA + S-adenosyl-L-methionine = 5-methylcytidine(49) in tRNA + S-adenosyl-L-homocysteine + H(+). It catalyses the reaction cytidine(50) in tRNA + S-adenosyl-L-methionine = 5-methylcytidine(50) in tRNA + S-adenosyl-L-homocysteine + H(+). The enzyme catalyses cytidine(34) in tRNA precursor + S-adenosyl-L-methionine = 5-methylcytidine(34) in tRNA precursor + S-adenosyl-L-homocysteine + H(+). It carries out the reaction a cytidine in mRNA + S-adenosyl-L-methionine = a 5-methylcytidine in mRNA + S-adenosyl-L-homocysteine + H(+). In terms of biological role, RNA cytosine C(5)-methyltransferase that methylates cytosine to 5-methylcytosine (m5C) in various RNAs, such as tRNAs, mRNAs and some long non-coding RNAs (lncRNAs). Involved in various processes, such as epidermal stem cell differentiation, testis differentiation and maternal to zygotic transition during early development: acts by increasing protein synthesis; cytosine C(5)-methylation promoting tRNA stability and preventing mRNA decay. Methylates cytosine to 5-methylcytosine (m5C) at positions 34 and 48 of intron-containing tRNA(Leu)(CAA) precursors, and at positions 48, 49 and 50 of tRNA(Gly)(GCC) precursors. tRNA methylation is required generation of RNA fragments derived from tRNAs (tRFs). Also mediates C(5)-methylation of mitochondrial tRNAs. Catalyzes cytosine C(5)-methylation of mRNAs, leading to stabilize them and prevent mRNA decay. Cytosine C(5)-methylation of mRNAs also regulates mRNA export. Also mediates cytosine C(5)-methylation of non-coding RNAs, such as vault RNAs (vtRNAs), promoting their processing into regulatory small RNAs. Required for proper spindle assembly and chromosome segregation, independently of its methyltransferase activity. The protein is RNA cytosine-C(5)-methyltransferase NSUN2 of Xenopus tropicalis (Western clawed frog).